The sequence spans 286 residues: Probable syntaxin-7B (286 aa).

The Cytoplasmic segment spans residues 1-257 (MTDRQPLISK…YVYKSSYRKK (257 aa)). The segment covering 97 to 107 (LSTSNKKESSH) has biased composition (basic and acidic residues). The disordered stretch occupies residues 97 to 160 (LSTSNKKESS…TNNNNNNNNN (64 aa)). Low complexity predominate over residues 114 to 160 (QQQQQQQNNGNSNNNGYNTRGGYNQQQQQQQQQYNDYTNNNNNNNNN). One can recognise a t-SNARE coiled-coil homology domain in the interval 185 to 247 (NRILDERNAN…EDAVVELEKA (63 aa)). The chain crosses the membrane as a helical; Anchor for type IV membrane protein span at residues 258-278 (MIIFVICLLVTLVAVGIFLAI). The Vesicular segment spans residues 279 to 286 (YYGVIKKK).

The protein belongs to the syntaxin family.

It is found in the membrane. This is Probable syntaxin-7B (syn7B) from Dictyostelium discoideum (Social amoeba).